Consider the following 412-residue polypeptide: Palmitoyltransferase swf1 (412 aa).

Over 1–2 (MG) the chain is Lumenal. Residues 3 to 23 (LLRTIALVILGFSAFIFTVLF) form a helical membrane-spanning segment. Residues 24-78 (GRLPVFRKTPIGLLHRIIWLHIPHGISYIDARLFNGRILRSWGQAGNYILYENHP) lie on the Cytoplasmic side of the membrane. The helical transmembrane segment at 79-99 (LVLIFFTTILVIGELIFIPSA) threads the bilayer. At 100-107 (WPRISVMH) the chain is on the lumenal side. A helical transmembrane segment spans residues 108–128 (QLYIPIIIALPYYFLYVSVVT). Topologically, residues 129–198 (KSYITPDNHA…TNCVGLNNYH (70 aa)) are cytoplasmic. The 51-residue stretch at 155 to 205 (HSCETCHFLKPARSKHCSYCKRCVSRQDHHCIWLTNCVGLNNYHYFLYLLL) folds into the DHHC domain. Residues 199-219 (YFLYLLLSLSVMLTYGSWLGY) form a helical membrane-spanning segment. Residues 220–265 (SLLSQTLDRLIPPSSPVRLRKQSWPTFLNMWAAVVAYDTRIGGVTM) are Lumenal-facing. A helical transmembrane segment spans residues 266-286 (LMFMTAPLAFAFLVYHVYLIW). The Cytoplasmic portion of the chain corresponds to 287–412 (AGMTTNESAK…NYAAGKAHRA (126 aa)).

This sequence belongs to the DHHC palmitoyltransferase family. SWF1 subfamily.

The protein resides in the endoplasmic reticulum membrane. The catalysed reaction is L-cysteinyl-[protein] + hexadecanoyl-CoA = S-hexadecanoyl-L-cysteinyl-[protein] + CoA. Palmitoyltransferase that targets several endosomal SNAREs. Palmitoylates the SNAREs at cysteine residues close to the cytoplasmic end of their transmembrane domain. May have a role in the cellular quality control of transmembrane domain-containing proteins. This Emericella nidulans (strain FGSC A4 / ATCC 38163 / CBS 112.46 / NRRL 194 / M139) (Aspergillus nidulans) protein is Palmitoyltransferase swf1 (swf1).